The sequence spans 231 residues: Proteasome subunit alpha type-2 (231 aa).

It belongs to the peptidase T1A family. In terms of assembly, the 26S proteasome consists of a 20S proteasome core and two 19S regulatory subunits. The 20S proteasome core is composed of 28 subunits that are arranged in four stacked rings, resulting in a barrel-shaped structure. The two end rings are each formed by seven alpha subunits, and the two central rings are each formed by seven beta subunits. The catalytic chamber with the active sites is on the inside of the barrel.

It localises to the cytoplasm. The protein localises to the nucleus. Its function is as follows. The proteasome is a multicatalytic proteinase complex which is characterized by its ability to cleave peptides with Arg, Phe, Tyr, Leu, and Glu adjacent to the leaving group at neutral or slightly basic pH. The proteasome has an ATP-dependent proteolytic activity. This is Proteasome subunit alpha type-2 from Trypanosoma brucei brucei.